The sequence spans 325 residues: Formimidoylglutamase (325 aa).

Mn(2+) is bound by residues His-125, Asp-155, His-157, Asp-159, Cys-246, and Asp-248.

The protein belongs to the arginase family. Mn(2+) is required as a cofactor.

It carries out the reaction N-formimidoyl-L-glutamate + H2O = formamide + L-glutamate. It participates in amino-acid degradation; L-histidine degradation into L-glutamate; L-glutamate from N-formimidoyl-L-glutamate (hydrolase route): step 1/1. Functionally, catalyzes the conversion of N-formimidoyl-L-glutamate to L-glutamate and formamide. The polypeptide is Formimidoylglutamase (Ralstonia nicotianae (strain ATCC BAA-1114 / GMI1000) (Ralstonia solanacearum)).